The sequence spans 740 residues: Vertnin (740 aa).

3 disordered regions span residues 485–506, 560–616, and 653–673; these read EAGE…RGLI, PGMQ…DQNV, and TQSQ…APGG. Residues 578–604 show a composition bias toward basic and acidic residues; the sequence is QKPEGRQKPEEQQKPEGRQKPEGRQKP. The segment covering 653 to 667 has biased composition (polar residues); it reads TQSQPHSGSLPSQTL.

Belongs to the vertnin family.

The protein localises to the nucleus. In terms of biological role, acts as a transcription factor that regulates development of thoracic vertebrae. The protein is Vertnin (Vrtn) of Mus musculus (Mouse).